Consider the following 66-residue polypeptide: Small ribosomal subunit protein bS21 (66 aa).

It belongs to the bacterial ribosomal protein bS21 family.

The sequence is that of Small ribosomal subunit protein bS21 from Solidesulfovibrio magneticus (strain ATCC 700980 / DSM 13731 / RS-1) (Desulfovibrio magneticus).